Here is a 203-residue protein sequence, read N- to C-terminus: DNA-directed RNA polymerase III subunit rpc8 (203 aa).

The protein belongs to the eukaryotic RPB7/RPC8 RNA polymerase subunit family. As to quaternary structure, component of the RNA polymerase III (Pol III) complex consisting of 17 subunits. Rpc25/rpc8 and rpc17/rpc9 form a Pol III subcomplex.

It is found in the cytoplasm. Its subcellular location is the nucleus. In terms of biological role, DNA-dependent RNA polymerase catalyzes the transcription of DNA into RNA using the four ribonucleoside triphosphates as substrates. Specific peripheric component of RNA polymerase III which synthesizes small RNAs, such as 5S rRNA and tRNA. This chain is DNA-directed RNA polymerase III subunit rpc8 (rpc25), found in Schizosaccharomyces pombe (strain 972 / ATCC 24843) (Fission yeast).